Here is a 555-residue protein sequence, read N- to C-terminus: Chaperonin GroEL (555 aa).

ATP is bound by residues Thr-29–Pro-32, Lys-50, Asp-86–Thr-90, Gly-418, and Asp-499. The tract at residues His-528–Phe-555 is disordered. The span at Arg-537 to Phe-555 shows a compositional bias: gly residues.

This sequence belongs to the chaperonin (HSP60) family. As to quaternary structure, forms a cylinder of 14 subunits composed of two heptameric rings stacked back-to-back. Interacts with the co-chaperonin GroES.

Its subcellular location is the cytoplasm. It carries out the reaction ATP + H2O + a folded polypeptide = ADP + phosphate + an unfolded polypeptide.. In terms of biological role, together with its co-chaperonin GroES, plays an essential role in assisting protein folding. The GroEL-GroES system forms a nano-cage that allows encapsulation of the non-native substrate proteins and provides a physical environment optimized to promote and accelerate protein folding. The chain is Chaperonin GroEL from Orientia tsutsugamushi (Rickettsia tsutsugamushi).